The chain runs to 427 residues: F-box protein At2g16450 (427 aa).

Positions 1–45 constitute an F-box domain; it reads MNPSPITIDLILEILSRLPAKSVRRFHCVSKRWASIFGSPYFKEL.

The chain is F-box protein At2g16450 from Arabidopsis thaliana (Mouse-ear cress).